The following is a 356-amino-acid chain: V-type proton ATPase subunit d (356 aa).

It belongs to the V-ATPase V0D/AC39 subunit family. In terms of assembly, V-ATPase is a heteromultimeric enzyme composed of a peripheral catalytic V1 complex (components A to H) attached to an integral membrane V0 proton pore complex (components: a, c, c', c'' and d).

Its function is as follows. Subunit of the integral membrane V0 complex of vacuolar ATPase. Vacuolar ATPase is responsible for acidifying a variety of intracellular compartments in eukaryotic cells, thus providing most of the energy required for transport processes in the vacuolar system. The polypeptide is V-type proton ATPase subunit d (vatD-1) (Dictyostelium discoideum (Social amoeba)).